The following is a 627-amino-acid chain: Glucokinase regulatory protein (627 aa).

SIS domains lie at 90–286 (VQEV…QGVV) and 320–499 (VGIS…LLGK). Beta-D-fructose 1-phosphate-binding positions include 109 to 110 (TS), Glu-153, and 179 to 181 (SVG). Residue 109–110 (TS) coordinates beta-D-fructose 6-phosphate. A beta-D-fructose 6-phosphate-binding site is contributed by 179 to 181 (SVG). The segment at 199–200 (AV) is important for interaction with GCK. Beta-D-fructose 1-phosphate is bound at residue Glu-348. Positions 463–465 (LLF) are essential for interaction with GCK. Lys-514 contributes to the beta-D-fructose 1-phosphate binding site. Position 514 (Lys-514) interacts with beta-D-fructose 6-phosphate.

It belongs to the GCKR family. Interacts (fructose 6-phosphate bound form) with GCK. Detected in liver (at protein level). Not detected in muscle, brain, heart, testis, intestine or spleen.

The protein localises to the cytoplasm. It is found in the nucleus. Its subcellular location is the mitochondrion. Functionally, regulates glucokinase (GCK) by forming an inactive complex with this enzyme. Acts by promoting GCK recruitment to the nucleus, possibly to provide a reserve of GCK that can be quickly released in the cytoplasm after a meal. The affinity of GCKR for GCK is modulated by fructose metabolites: GCKR with bound fructose 6-phosphate has increased affinity for GCK, while GCKR with bound fructose 1-phosphate has strongly decreased affinity for GCK and does not inhibit GCK activity. In Rattus norvegicus (Rat), this protein is Glucokinase regulatory protein.